Reading from the N-terminus, the 407-residue chain is Probable tRNA sulfurtransferase (407 aa).

One can recognise a THUMP domain in the interval asparagine 61 to valine 165. ATP contacts are provided by residues methionine 183 to leucine 184, histidine 208 to phenylalanine 209, arginine 265, glycine 287, and glutamine 296.

Belongs to the ThiI family.

It localises to the cytoplasm. The catalysed reaction is [ThiI sulfur-carrier protein]-S-sulfanyl-L-cysteine + a uridine in tRNA + 2 reduced [2Fe-2S]-[ferredoxin] + ATP + H(+) = [ThiI sulfur-carrier protein]-L-cysteine + a 4-thiouridine in tRNA + 2 oxidized [2Fe-2S]-[ferredoxin] + AMP + diphosphate. It carries out the reaction [ThiS sulfur-carrier protein]-C-terminal Gly-Gly-AMP + S-sulfanyl-L-cysteinyl-[cysteine desulfurase] + AH2 = [ThiS sulfur-carrier protein]-C-terminal-Gly-aminoethanethioate + L-cysteinyl-[cysteine desulfurase] + A + AMP + 2 H(+). The protein operates within cofactor biosynthesis; thiamine diphosphate biosynthesis. Its function is as follows. Catalyzes the ATP-dependent transfer of a sulfur to tRNA to produce 4-thiouridine in position 8 of tRNAs, which functions as a near-UV photosensor. Also catalyzes the transfer of sulfur to the sulfur carrier protein ThiS, forming ThiS-thiocarboxylate. This is a step in the synthesis of thiazole, in the thiamine biosynthesis pathway. The sulfur is donated as persulfide by IscS. The protein is Probable tRNA sulfurtransferase of Staphylococcus aureus (strain JH1).